The primary structure comprises 751 residues: Pyridoxal-dependent decarboxylase domain-containing protein 1 (751 aa).

The segment at 659 to 751 (QMRKEDSPDS…QEAESVETIR (93 aa)) is disordered. The segment covering 690–702 (DSISETSSVSQLE) has biased composition (polar residues). Positions 720 to 729 (PQERPAHILE) are enriched in basic and acidic residues. Positions 742 to 751 (QEAESVETIR) are enriched in acidic residues.

It belongs to the group II decarboxylase family. Pyridoxal 5'-phosphate is required as a cofactor.

This chain is Pyridoxal-dependent decarboxylase domain-containing protein 1 (pdxdc1), found in Danio rerio (Zebrafish).